A 146-amino-acid chain; its full sequence is Endoribonuclease YbeY (146 aa).

Zn(2+) contacts are provided by H108, H112, and H118.

Belongs to the endoribonuclease YbeY family. The cofactor is Zn(2+).

It is found in the cytoplasm. In terms of biological role, single strand-specific metallo-endoribonuclease involved in late-stage 70S ribosome quality control and in maturation of the 3' terminus of the 16S rRNA. This Onion yellows phytoplasma (strain OY-M) protein is Endoribonuclease YbeY.